Reading from the N-terminus, the 412-residue chain is 46 kDa FK506-binding nuclear protein (412 aa).

3 stretches are compositionally biased toward acidic residues: residues 95-113 (EEDL…EEEA), 169-178 (GEDIDTDEND), and 188-216 (EGDD…EEEE). Positions 95–304 (EEDLEDEEEA…PVEKKEKKQI (210 aa)) are disordered. The segment covering 247–257 (KSQKRRLKKKL) has biased composition (basic residues). Residues 271–303 (DKPKKEEPQQKAEKKKPEAKKEEAPVEKKEKKQ) show a composition bias toward basic and acidic residues. The PPIase FKBP-type domain occupies 324–412 (GKVVMVYYEG…VFEVDLKNVK (89 aa)).

Belongs to the FKBP-type PPIase family. In terms of processing, phosphorylated by a nuclear kinase in the presence of Mg(2+) and ATP.

It is found in the nucleus. The catalysed reaction is [protein]-peptidylproline (omega=180) = [protein]-peptidylproline (omega=0). Inhibited by both FK506 and rapamycin. In terms of biological role, PPIases accelerate the folding of proteins. It catalyzes the cis-trans isomerization of proline imidic peptide bonds in oligopeptides. Binds double-stranded DNA in vitro. The chain is 46 kDa FK506-binding nuclear protein (FKBP46) from Spodoptera frugiperda (Fall armyworm).